We begin with the raw amino-acid sequence, 511 residues long: Cytochrome P450 93B2 (511 aa).

The helical transmembrane segment at leucine 4–tyrosine 24 threads the bilayer. Cysteine 447 provides a ligand contact to heme.

Belongs to the cytochrome P450 family. Requires heme as cofactor.

The protein localises to the membrane. It carries out the reaction a flavanone + reduced [NADPH--hemoprotein reductase] + O2 = a flavone + oxidized [NADPH--hemoprotein reductase] + 2 H2O + H(+). Its pathway is secondary metabolite biosynthesis; flavonoid biosynthesis. Its function is as follows. Functions as a flavone synthase II (FNSII) that catalyzes the direct conversion of flavanones to flavones. In vitro, can convert liquiritigenin, naringenin and eriodictyol to 7,4'-dihydroxyflavone, apigenin and luteolin, respectively. The polypeptide is Cytochrome P450 93B2 (Gerbera hybrida (Daisy)).